The sequence spans 905 residues: Cadherin-2B (905 aa).

Residues 1-28 (MCRKQPFLLPTLLGILAALMLQQGPVEA) form the signal peptide. A propeptide spanning residues 29 to 160 (FGGSRLCKTG…NSNGLQRQKR (132 aa)) is cleaved from the precursor. Cadherin domains lie at 161 to 268 (DWVI…RPEF), 269 to 383 (LHQI…PPEF), 384 to 498 (TAMT…NPYF), 499 to 604 (TPNP…DNAP), and 605 to 713 (YVYP…TTAP). At 161–723 (DWVIPPINVP…IIGTGLGTGA (563 aa)) the chain is on the extracellular side. Residue Glu171 participates in Ca(2+) binding. Asn191 is a glycosylation site (N-linked (GlcNAc...) asparagine). The Ca(2+) site is built by Asp227, Glu229, Asp260, Met261, Asn262, Asp263, and Asn264. Asn274 carries N-linked (GlcNAc...) asparagine glycosylation. Ca(2+)-binding residues include Asp294, Asp296, and Asn302. An N-linked (GlcNAc...) asparagine glycan is attached at Asn326. Residue Asp354 coordinates Ca(2+). N-linked (GlcNAc...) asparagine glycosylation is found at Asn403, Asn573, Asn623, Asn651, and Asn692. Residues 724-745 (IIAILLCIIILLTLVLMFVVWM) traverse the membrane as a helical segment. Topologically, residues 746–905 (KRRDKERQAK…LADMYGGSDD (160 aa)) are cytoplasmic. Disordered stretches follow at residues 774 to 800 (EEGG…PDTI) and 862 to 883 (SGST…EQDY). The span at 775 to 784 (EGGGEEDQDY) shows a compositional bias: acidic residues. Positions 862 to 879 (SGSTAGSLSSLNSSSSGG) are enriched in low complexity.

As to quaternary structure, homodimer (via extracellular region). Can also form heterodimers with other cadherins (via extracellular region). Dimerization occurs in trans, i.e. with a cadherin chain from another cell.

The protein localises to the cell membrane. Its subcellular location is the sarcolemma. It is found in the cell junction. It localises to the cell surface. The protein resides in the desmosome. The protein localises to the adherens junction. Its function is as follows. Calcium-dependent cell adhesion protein; preferentially mediates homotypic cell-cell adhesion. Cadherins may thus contribute to the sorting of heterogeneous cell types, and thereby play an important role during embryonic development. Required for proper neurite branching. Required for pre- and postsynaptic organization. This Xenopus laevis (African clawed frog) protein is Cadherin-2B (cdh2-b).